The following is a 526-amino-acid chain: Protein spinster homolog 1 (526 aa).

The disordered stretch occupies residues 1–43 (MTSRSSQGDAAPFLTQADNTEEEGAPDPGGHSSDEEEEEGKDH). A run of 12 helical transmembrane segments spans residues 48 to 68 (HLLT…LFYI), 98 to 118 (GLVQ…FGYL), 126 to 146 (LIMC…SFVS), 159 to 179 (LVGV…ADLF), 187 to 207 (MLSF…IAGS), 218 to 238 (WALR…IFVA), 272 to 292 (FILS…LALW), 321 to 341 (MIFG…GVEI), 355 to 375 (LVCA…LAFA), 385 to 405 (FIFI…DILL), 419 to 439 (LQIV…IGVI), and 463 to 483 (MICA…ALFI).

This sequence belongs to the major facilitator superfamily. Spinster (TC 2.A.1.49) family.

It is found in the lysosome membrane. The enzyme catalyses a 1-acyl-sn-glycero-3-phosphocholine(out) + H(+)(out) = a 1-acyl-sn-glycero-3-phosphocholine(in) + H(+)(in). It catalyses the reaction a 1-acyl-sn-glycero-3-phosphoethanolamine(out) + H(+)(out) = a 1-acyl-sn-glycero-3-phosphoethanolamine(in) + H(+)(in). The catalysed reaction is a 1-O-(1Z-alkenyl)-sn-glycero-3-phosphocholine(out) + H(+)(out) = a 1-O-(1Z-alkenyl)-sn-glycero-3-phosphocholine(in) + H(+)(in). It carries out the reaction a 1-O-(1Z-alkenyl)-sn-glycero-3-phosphoethanolamine(out) + H(+)(out) = a 1-O-(1Z-alkenyl)-sn-glycero-3-phosphoethanolamine(in) + H(+)(in). In terms of biological role, mediates the rate-limiting, proton-dependent, lysosomal efflux of lysophospholipids. Selective for zwitterionic headgroups such as lysophosphatidylcholine (LPC) and lysophosphatidylethanolamine (LPE). Essential player in lysosomal homeostasis. The protein is Protein spinster homolog 1 (spns1) of Xenopus tropicalis (Western clawed frog).